The chain runs to 113 residues: Nucleoid-associated protein THA_1374 (113 aa).

The protein belongs to the YbaB/EbfC family. Homodimer.

It is found in the cytoplasm. The protein localises to the nucleoid. Binds to DNA and alters its conformation. May be involved in regulation of gene expression, nucleoid organization and DNA protection. The polypeptide is Nucleoid-associated protein THA_1374 (Thermosipho africanus (strain TCF52B)).